Consider the following 395-residue polypeptide: MHC class I-like protein MILL1 (395 aa).

An N-terminal signal peptide occupies residues 1 to 32 (MLLSRNLRALAAIHLWIVYLLLEDLLGTCAEG). The interval 57 to 148 (AVAEPHTLRY…ITAQNGQNTD (92 aa)) is alpha-1. N-linked (GlcNAc...) asparagine glycosylation is found at Asn-98, Asn-163, and Asn-199. Positions 149-240 (LHILQATFGC…SLRNGLLNTG (92 aa)) are alpha-2. 2 disulfide bridges follow: Cys-158-Cys-221 and Cys-260-Cys-317. The tract at residues 241–337 (FPKVIVTFRN…EPAATEAPVY (97 aa)) is alpha-3. In terms of domain architecture, Ig-like C1-type spans 242-333 (PKVIVTFRNY…HNINEPAATE (92 aa)). The disordered stretch occupies residues 332-352 (TEAPVYGARREQPPTSGVGSR). The connecting peptide stretch occupies residues 338-368 (GARREQPPTSGVGSRVGKSLWSAMTTALVVI). Residue Ser-369 is the site of GPI-anchor amidated serine attachment. A propeptide spans 370–395 (WTLSQKLMGPLLWFCSGGFCSFLQCW) (removed in mature form).

It belongs to the MHC class I family. In terms of assembly, heterodimer with B2M. N-glycosylated. In terms of tissue distribution, expressed in stomach, intestine, uterus, skeletal muscle and heart.

It is found in the cell membrane. In Mus musculus (Mouse), this protein is MHC class I-like protein MILL1.